A 179-amino-acid chain; its full sequence is GAHLVPTKSGDADTYNANSDRTLCALLSELPLEKAVMVTYGGDDSLIAFPRGTQFVDPCPKLATKWNFECKIFKYDVPMFCGKFLLKTSSCYEFVPDPVKVLTKLGKKSIKDVQHLAEIYISLNDSNRALGNYMVVSKLSESVSDRYLYKGDSVHALCALWKHIKSFTALCTLLPRRKG.

Belongs to the ssRNA positive-strand viruses RNA-directed RNA polymerase family.

It catalyses the reaction RNA(n) + a ribonucleoside 5'-triphosphate = RNA(n+1) + diphosphate. It carries out the reaction ATP + H2O = ADP + phosphate + H(+). Replicase large subunit: is an RNA-dependent RNA polymerase active in viral RNA replication. This Tobacco rattle virus (strain PSG) protein is Replicase large subunit.